A 351-amino-acid chain; its full sequence is S-adenosylmethionine:tRNA ribosyltransferase-isomerase (351 aa).

The protein belongs to the QueA family. As to quaternary structure, monomer.

The protein resides in the cytoplasm. The enzyme catalyses 7-aminomethyl-7-carbaguanosine(34) in tRNA + S-adenosyl-L-methionine = epoxyqueuosine(34) in tRNA + adenine + L-methionine + 2 H(+). Its pathway is tRNA modification; tRNA-queuosine biosynthesis. Functionally, transfers and isomerizes the ribose moiety from AdoMet to the 7-aminomethyl group of 7-deazaguanine (preQ1-tRNA) to give epoxyqueuosine (oQ-tRNA). The polypeptide is S-adenosylmethionine:tRNA ribosyltransferase-isomerase (Sphingopyxis alaskensis (strain DSM 13593 / LMG 18877 / RB2256) (Sphingomonas alaskensis)).